The following is a 667-amino-acid chain: mRNA cap guanine-N(7) methyltransferase (667 aa).

Residues 1–19 (MYDPARDSWEERDGDEARS) are compositionally biased toward basic and acidic residues. Residues 1-272 (MYDPARDSWE…RRRQEERERA (272 aa)) are disordered. The segment covering 33-52 (FSSSEQIYGASGENNNTTDL) has biased composition (polar residues). The span at 72-87 (SPPAQSTTQTPPSIST) shows a compositional bias: low complexity. Residues 88 to 128 (HVQSPVNPAAQEASNTQSLTSAAQNQSNKSTTTMDNTSGSA) show a composition bias toward polar residues. Positions 132–142 (PRADPSDKSNR) are enriched in basic and acidic residues. Residues 147–156 (ASPTDQNGSQ) show a composition bias toward polar residues. Residues 256-272 (LVDRETLRRRQEERERA) show a composition bias toward basic and acidic residues. The mRNA cap 0 methyltransferase domain maps to 309-667 (SKIKGLRSFN…FYHAFCFYKV (359 aa)). MRNA is bound at residue 318-319 (NN). Residues lysine 322, glycine 365, aspartate 389, aspartate 427, 470 to 472 (MFT), and tyrosine 475 contribute to the S-adenosyl-L-methionine site. Basic and acidic residues predominate over residues 521–535 (KKERQSQAKKEKTDE). Positions 521–547 (KKERQSQAKKEKTDEAPEDGEVEEDDG) are disordered. Positions 536–547 (APEDGEVEEDDG) are enriched in acidic residues.

Belongs to the class I-like SAM-binding methyltransferase superfamily. mRNA cap 0 methyltransferase family.

The protein resides in the nucleus. The enzyme catalyses a 5'-end (5'-triphosphoguanosine)-ribonucleoside in mRNA + S-adenosyl-L-methionine = a 5'-end (N(7)-methyl 5'-triphosphoguanosine)-ribonucleoside in mRNA + S-adenosyl-L-homocysteine. Responsible for methylating the 5'-cap structure of mRNAs. This chain is mRNA cap guanine-N(7) methyltransferase (abd1), found in Neosartorya fischeri (strain ATCC 1020 / DSM 3700 / CBS 544.65 / FGSC A1164 / JCM 1740 / NRRL 181 / WB 181) (Aspergillus fischerianus).